Reading from the N-terminus, the 262-residue chain is Small ribosomal subunit protein uS2 (262 aa).

It belongs to the universal ribosomal protein uS2 family.

The chain is Small ribosomal subunit protein uS2 from Borrelia garinii subsp. bavariensis (strain ATCC BAA-2496 / DSM 23469 / PBi) (Borreliella bavariensis).